The chain runs to 163 residues: Photosystem II extrinsic protein V (163 aa).

The first 26 residues, 1-26, serve as a signal peptide directing secretion; the sequence is MLRKLILITVATVFFACQLLVNPVSA. Heme c is bound by residues C63, C66, H67, and H118.

This sequence belongs to the cytochrome c family. PsbV subfamily. As to quaternary structure, PSII is composed of 1 copy each of membrane proteins PsbA, PsbB, PsbC, PsbD, PsbE, PsbF, PsbH, PsbI, PsbJ, PsbK, PsbL, PsbM, PsbT, PsbX, PsbY, PsbZ, Psb30/Ycf12, peripheral proteins PsbO, CyanoQ (PsbQ), PsbU, PsbV and a large number of cofactors. It forms dimeric complexes. It depends on heme c as a cofactor.

The protein localises to the cellular thylakoid membrane. Its function is as follows. One of the extrinsic, lumenal subunits of photosystem II (PSII). PSII is a light-driven water plastoquinone oxidoreductase, using light energy to abstract electrons from H(2)O, generating a proton gradient subsequently used for ATP formation. The extrinsic proteins stabilize the structure of photosystem II oxygen-evolving complex (OEC), the ion environment of oxygen evolution and protect the OEC against heat-induced inactivation. Low-potential cytochrome c that plays a role in the OEC of PSII. This chain is Photosystem II extrinsic protein V, found in Aphanothece halophytica.